Consider the following 488-residue polypeptide: Protein nucleotidyltransferase YdiU (488 aa).

ATP is bound by residues glycine 91, glycine 93, arginine 94, lysine 114, aspartate 126, glycine 127, arginine 177, and arginine 184. The interval 108-127 is disordered; the sequence is RFDIQLKGSGPTPYSRRGDG. Aspartate 253 functions as the Proton acceptor in the catalytic mechanism. Residues asparagine 254 and aspartate 263 each coordinate Mg(2+). Aspartate 263 is a binding site for ATP.

Belongs to the SELO family. The cofactor is Mg(2+). Mn(2+) serves as cofactor.

The enzyme catalyses L-seryl-[protein] + ATP = 3-O-(5'-adenylyl)-L-seryl-[protein] + diphosphate. It catalyses the reaction L-threonyl-[protein] + ATP = 3-O-(5'-adenylyl)-L-threonyl-[protein] + diphosphate. The catalysed reaction is L-tyrosyl-[protein] + ATP = O-(5'-adenylyl)-L-tyrosyl-[protein] + diphosphate. It carries out the reaction L-histidyl-[protein] + UTP = N(tele)-(5'-uridylyl)-L-histidyl-[protein] + diphosphate. The enzyme catalyses L-seryl-[protein] + UTP = O-(5'-uridylyl)-L-seryl-[protein] + diphosphate. It catalyses the reaction L-tyrosyl-[protein] + UTP = O-(5'-uridylyl)-L-tyrosyl-[protein] + diphosphate. Its function is as follows. Nucleotidyltransferase involved in the post-translational modification of proteins. It can catalyze the addition of adenosine monophosphate (AMP) or uridine monophosphate (UMP) to a protein, resulting in modifications known as AMPylation and UMPylation. This chain is Protein nucleotidyltransferase YdiU, found in Bacillus anthracis (strain A0248).